A 174-amino-acid polypeptide reads, in one-letter code: Large ribosomal subunit protein uL10 (174 aa).

This sequence belongs to the universal ribosomal protein uL10 family. Part of the ribosomal stalk of the 50S ribosomal subunit. The N-terminus interacts with L11 and the large rRNA to form the base of the stalk. The C-terminus forms an elongated spine to which L12 dimers bind in a sequential fashion forming a multimeric L10(L12)X complex.

In terms of biological role, forms part of the ribosomal stalk, playing a central role in the interaction of the ribosome with GTP-bound translation factors. The sequence is that of Large ribosomal subunit protein uL10 from Trichlorobacter lovleyi (strain ATCC BAA-1151 / DSM 17278 / SZ) (Geobacter lovleyi).